The chain runs to 349 residues: Anthranilate phosphoribosyltransferase (349 aa).

5-phospho-alpha-D-ribose 1-diphosphate contacts are provided by residues G82, 85 to 86 (GD), 92 to 95 (NVST), 110 to 118 (KHGNRAVSG), and S122. G82 contributes to the anthranilate binding site. A Mg(2+)-binding site is contributed by S94. N113 contacts anthranilate. Position 168 (R168) interacts with anthranilate. Mg(2+) contacts are provided by D227 and E228.

Belongs to the anthranilate phosphoribosyltransferase family. In terms of assembly, homodimer. The cofactor is Mg(2+).

It carries out the reaction N-(5-phospho-beta-D-ribosyl)anthranilate + diphosphate = 5-phospho-alpha-D-ribose 1-diphosphate + anthranilate. The protein operates within amino-acid biosynthesis; L-tryptophan biosynthesis; L-tryptophan from chorismate: step 2/5. In terms of biological role, catalyzes the transfer of the phosphoribosyl group of 5-phosphorylribose-1-pyrophosphate (PRPP) to anthranilate to yield N-(5'-phosphoribosyl)-anthranilate (PRA). The polypeptide is Anthranilate phosphoribosyltransferase (Pseudomonas entomophila (strain L48)).